The sequence spans 357 residues: Histidinol-phosphate aminotransferase 1 (357 aa).

Residue Lys217 is modified to N6-(pyridoxal phosphate)lysine.

Belongs to the class-II pyridoxal-phosphate-dependent aminotransferase family. Histidinol-phosphate aminotransferase subfamily. In terms of assembly, homodimer. Requires pyridoxal 5'-phosphate as cofactor.

It catalyses the reaction L-histidinol phosphate + 2-oxoglutarate = 3-(imidazol-4-yl)-2-oxopropyl phosphate + L-glutamate. Its pathway is amino-acid biosynthesis; L-histidine biosynthesis; L-histidine from 5-phospho-alpha-D-ribose 1-diphosphate: step 7/9. The protein is Histidinol-phosphate aminotransferase 1 of Burkholderia lata (strain ATCC 17760 / DSM 23089 / LMG 22485 / NCIMB 9086 / R18194 / 383).